A 745-amino-acid polypeptide reads, in one-letter code: ATP-dependent zinc metalloprotease FtsH (745 aa).

Over 1–11 the chain is Cytoplasmic; it reads MNNRRNGLFRN. A helical transmembrane segment spans residues 12–32; that stretch reads SLFYILMFLSLMGIIYFFFGG. Topologically, residues 33–131 are extracellular; the sequence is NSGSQTQNIR…VTAKAEESSG (99 aa). The chain crosses the membrane as a helical span at residues 132–152; that stretch reads IWVTLLMYIAPVILMLFLFYM. Residues 153-745 are Cytoplasmic-facing; the sequence is MMGQAGQGGG…SSQDDTNSQA (593 aa). 227–234 contributes to the ATP binding site; the sequence is GPPGTGKT. Histidine 449 is a binding site for Zn(2+). Glutamate 450 is an active-site residue. Zn(2+) contacts are provided by histidine 453 and aspartate 525. Basic and acidic residues predominate over residues 630–673; the sequence is MPEKDSNEFPSEKAATFEESKRELERREAEKHAQNQSADDKQAD. Residues 630–745 are disordered; sequence MPEKDSNEFP…SSQDDTNSQA (116 aa). Residues 690-704 are compositionally biased toward low complexity; it reads SESDASSEVSADSSV. Residues 705 to 745 are compositionally biased toward polar residues; that stretch reads NSTANSATESATDSDVATSATGLPNAESATPSSQDDTNSQA.

In the central section; belongs to the AAA ATPase family. This sequence in the C-terminal section; belongs to the peptidase M41 family. Homohexamer. Requires Zn(2+) as cofactor.

It localises to the cell membrane. Acts as a processive, ATP-dependent zinc metallopeptidase for both cytoplasmic and membrane proteins. Plays a role in the quality control of integral membrane proteins. This is ATP-dependent zinc metalloprotease FtsH from Lactiplantibacillus plantarum (strain ATCC BAA-793 / NCIMB 8826 / WCFS1) (Lactobacillus plantarum).